The chain runs to 295 residues: Defective in cullin neddylation protein AAR3 (295 aa).

Residues Met-1–Tyr-180 form the DCUN1 domain. The short motif at Tyr-214–Leu-221 is the Nuclear localization signal element. The tract at residues Tyr-214 to Asn-251 is disordered. Acidic residues predominate over residues Glu-237–Leu-247.

It localises to the nucleus. Functionally, may contribute to the neddylation of all cullins by transferring NEDD8 from N-terminally acetylated NEDD8-conjugating E2s enzyme to different cullin C-terminal domain-RBX complexes; neddylation of cullins play an essential role in the regulation of SCF-type complexes activity. Regulates responses to the synthetic auxin 2,4-dichlorophenoxyacetic acid (2,4-D) in roots, probably by modulating the SCF(TIR1) ubiquitin E3 ligase complex-mediated proteolysis. The sequence is that of Defective in cullin neddylation protein AAR3 from Arabidopsis thaliana (Mouse-ear cress).